We begin with the raw amino-acid sequence, 327 residues long: DNA-directed RNA polymerase subunit alpha (327 aa).

The alpha N-terminal domain (alpha-NTD) stretch occupies residues 1-243 (MEKFLKYEIK…EHLNPIVNVN (243 aa)). Residues 260-327 (RVRSFAKQIE…VHELGLKLRS (68 aa)) form an alpha C-terminal domain (alpha-CTD) region.

Belongs to the RNA polymerase alpha chain family. In terms of assembly, homodimer. The RNAP catalytic core consists of 2 alpha, 1 beta, 1 beta' and 1 omega subunit. When a sigma factor is associated with the core the holoenzyme is formed, which can initiate transcription.

The catalysed reaction is RNA(n) + a ribonucleoside 5'-triphosphate = RNA(n+1) + diphosphate. Functionally, DNA-dependent RNA polymerase catalyzes the transcription of DNA into RNA using the four ribonucleoside triphosphates as substrates. The sequence is that of DNA-directed RNA polymerase subunit alpha from Mycoplasma pneumoniae (strain ATCC 29342 / M129 / Subtype 1) (Mycoplasmoides pneumoniae).